Consider the following 298-residue polypeptide: Probable oxidoreductase (298 aa).

Val9 to Thr33 lines the NAD(+) pocket. Ser139 provides a ligand contact to substrate. The active-site Proton acceptor is Tyr165.

This sequence belongs to the short-chain dehydrogenases/reductases (SDR) family.

In Streptomyces antibioticus, this protein is Probable oxidoreductase.